The sequence spans 210 residues: Probable glutathione S-transferase gst-36 (210 aa).

In terms of domain architecture, GST N-terminal spans 2 to 79 (PHFKFYYFDV…YLGHQFHRAG (78 aa)). Residues Tyr-8, Trp-39, Lys-43, 49 to 51 (GQV), and 63 to 64 (QT) each bind glutathione. Residues 81 to 210 (NAVDCARLDM…YVSQRKATPA (130 aa)) form the GST C-terminal domain.

It belongs to the GST superfamily. Sigma family.

It carries out the reaction RX + glutathione = an S-substituted glutathione + a halide anion + H(+). Functionally, conjugation of reduced glutathione to a wide number of exogenous and endogenous hydrophobic electrophiles. The chain is Probable glutathione S-transferase gst-36 (gst-36) from Caenorhabditis elegans.